Consider the following 507-residue polypeptide: ATP synthase subunit alpha (507 aa).

Glycine 170–threonine 177 provides a ligand contact to ATP.

This sequence belongs to the ATPase alpha/beta chains family. As to quaternary structure, F-type ATPases have 2 components, CF(1) - the catalytic core - and CF(0) - the membrane proton channel. CF(1) has five subunits: alpha(3), beta(3), gamma(1), delta(1), epsilon(1). CF(0) has three main subunits: a(1), b(2) and c(9-12). The alpha and beta chains form an alternating ring which encloses part of the gamma chain. CF(1) is attached to CF(0) by a central stalk formed by the gamma and epsilon chains, while a peripheral stalk is formed by the delta and b chains.

The protein localises to the cell inner membrane. The catalysed reaction is ATP + H2O + 4 H(+)(in) = ADP + phosphate + 5 H(+)(out). Its function is as follows. Produces ATP from ADP in the presence of a proton gradient across the membrane. The alpha chain is a regulatory subunit. This is ATP synthase subunit alpha from Fervidobacterium nodosum (strain ATCC 35602 / DSM 5306 / Rt17-B1).